We begin with the raw amino-acid sequence, 493 residues long: Galactose-1-phosphate uridylyltransferase (493 aa).

It belongs to the galactose-1-phosphate uridylyltransferase type 2 family.

The protein resides in the cytoplasm. The catalysed reaction is alpha-D-galactose 1-phosphate + UDP-alpha-D-glucose = alpha-D-glucose 1-phosphate + UDP-alpha-D-galactose. Its pathway is carbohydrate metabolism; galactose metabolism. This is Galactose-1-phosphate uridylyltransferase from Streptococcus pneumoniae (strain CGSP14).